The following is a 121-amino-acid chain: NADH-quinone oxidoreductase subunit A 1 (121 aa).

3 helical membrane-spanning segments follow: residues 11–31, 65–85, and 90–110; these read IAIF…APFA, LVSI…PWAV, and MGWF…VGFI.

This sequence belongs to the complex I subunit 3 family. In terms of assembly, NDH-1 is composed of 14 different subunits. Subunits NuoA, H, J, K, L, M, N constitute the membrane sector of the complex.

The protein localises to the cell inner membrane. It carries out the reaction a quinone + NADH + 5 H(+)(in) = a quinol + NAD(+) + 4 H(+)(out). In terms of biological role, NDH-1 shuttles electrons from NADH, via FMN and iron-sulfur (Fe-S) centers, to quinones in the respiratory chain. The immediate electron acceptor for the enzyme in this species is believed to be ubiquinone. Couples the redox reaction to proton translocation (for every two electrons transferred, four hydrogen ions are translocated across the cytoplasmic membrane), and thus conserves the redox energy in a proton gradient. The protein is NADH-quinone oxidoreductase subunit A 1 of Rhizobium meliloti (strain 1021) (Ensifer meliloti).